Consider the following 133-residue polypeptide: Small ribosomal subunit protein uS8 (133 aa).

The segment at 1 to 29 is disordered; it reads MANHDPISDMLTRIRNASEKRHETTRIPA. Positions 16–25 are enriched in basic and acidic residues; that stretch reads NASEKRHETT.

Belongs to the universal ribosomal protein uS8 family. As to quaternary structure, part of the 30S ribosomal subunit. Contacts proteins S5 and S12.

One of the primary rRNA binding proteins, it binds directly to 16S rRNA central domain where it helps coordinate assembly of the platform of the 30S subunit. The protein is Small ribosomal subunit protein uS8 of Prochlorococcus marinus (strain MIT 9211).